A 590-amino-acid chain; its full sequence is Arginine--tRNA ligase (590 aa).

The short motif at 130-140 is the 'HIGH' region element; sequence PNIAKEMHVGH.

This sequence belongs to the class-I aminoacyl-tRNA synthetase family. Monomer.

The protein resides in the cytoplasm. The enzyme catalyses tRNA(Arg) + L-arginine + ATP = L-arginyl-tRNA(Arg) + AMP + diphosphate. The polypeptide is Arginine--tRNA ligase (Synechococcus sp. (strain CC9605)).